Here is a 260-residue protein sequence, read N- to C-terminus: Ribonuclease PH (260 aa).

Phosphate-binding positions include arginine 87 and 125–127; that span reads GTR. The interval 232–260 is disordered; that stretch reads LAAPPAAGPPAPERAGAGSGSGGKGTGSR. A compositionally biased stretch (gly residues) spans 248 to 260; that stretch reads AGSGSGGKGTGSR.

The protein belongs to the RNase PH family. As to quaternary structure, homohexameric ring arranged as a trimer of dimers.

It catalyses the reaction tRNA(n+1) + phosphate = tRNA(n) + a ribonucleoside 5'-diphosphate. Its function is as follows. Phosphorolytic 3'-5' exoribonuclease that plays an important role in tRNA 3'-end maturation. Removes nucleotide residues following the 3'-CCA terminus of tRNAs; can also add nucleotides to the ends of RNA molecules by using nucleoside diphosphates as substrates, but this may not be physiologically important. Probably plays a role in initiation of 16S rRNA degradation (leading to ribosome degradation) during starvation. This is Ribonuclease PH from Parafrankia sp. (strain EAN1pec).